We begin with the raw amino-acid sequence, 130 residues long: Methylglyoxal synthase (130 aa).

One can recognise an MGS-like domain in the interval Met1–Cys130. Substrate contacts are provided by residues His11, Lys15, Thr37–Thr40, and Ser57–Gly58. Residue Asp63 is the Proton donor/acceptor of the active site. Substrate is bound at residue His90.

This sequence belongs to the methylglyoxal synthase family.

The enzyme catalyses dihydroxyacetone phosphate = methylglyoxal + phosphate. Catalyzes the formation of methylglyoxal from dihydroxyacetone phosphate. This chain is Methylglyoxal synthase, found in Burkholderia vietnamiensis (strain G4 / LMG 22486) (Burkholderia cepacia (strain R1808)).